Here is a 286-residue protein sequence, read N- to C-terminus: Small ribosomal subunit protein uS15m (286 aa).

A mitochondrion-targeting transit peptide spans 1 to 33 (MSIVGRNAILNLRISLCPLFMGKRSFVSSPVSN).

Belongs to the universal ribosomal protein uS15 family. As to quaternary structure, component of the mitochondrial small ribosomal subunit (mt-SSU). Mature yeast 74S mitochondrial ribosomes consist of a small (37S) and a large (54S) subunit. The 37S small subunit contains a 15S ribosomal RNA (15S mt-rRNA) and 34 different proteins. The 54S large subunit contains a 21S rRNA (21S mt-rRNA) and 46 different proteins. The precursor is processed in two steps involving mitochondrial intermediate peptidase (MIP) and mitochondrial processing peptidase (MPP).

Its subcellular location is the mitochondrion. Functionally, component of the mitochondrial ribosome (mitoribosome), a dedicated translation machinery responsible for the synthesis of mitochondrial genome-encoded proteins, including at least some of the essential transmembrane subunits of the mitochondrial respiratory chain. The mitoribosomes are attached to the mitochondrial inner membrane and translation products are cotranslationally integrated into the membrane. In Saccharomyces cerevisiae (strain ATCC 204508 / S288c) (Baker's yeast), this protein is Small ribosomal subunit protein uS15m (MRPS28).